Consider the following 768-residue polypeptide: DNA ligase (768 aa).

NAD(+) is bound by residues 30 to 34 (DAEYD), 79 to 80 (SL), and glutamate 190. The active-site N6-AMP-lysine intermediate is the lysine 192. 4 residues coordinate NAD(+): arginine 213, glutamate 250, lysine 367, and lysine 391. Zn(2+)-binding residues include cysteine 485, cysteine 488, cysteine 503, and cysteine 509. Residues 678-767 (AAEQPLSGLS…IPPEIQARMQ (90 aa)) enclose the BRCT domain.

Belongs to the NAD-dependent DNA ligase family. LigA subfamily. Mg(2+) is required as a cofactor. The cofactor is Mn(2+).

The enzyme catalyses NAD(+) + (deoxyribonucleotide)n-3'-hydroxyl + 5'-phospho-(deoxyribonucleotide)m = (deoxyribonucleotide)n+m + AMP + beta-nicotinamide D-nucleotide.. Functionally, DNA ligase that catalyzes the formation of phosphodiester linkages between 5'-phosphoryl and 3'-hydroxyl groups in double-stranded DNA using NAD as a coenzyme and as the energy source for the reaction. It is essential for DNA replication and repair of damaged DNA. In Magnetococcus marinus (strain ATCC BAA-1437 / JCM 17883 / MC-1), this protein is DNA ligase.